The sequence spans 281 residues: Apolipoprotein E (281 aa).

The first 18 residues, 1-18, serve as a signal peptide directing secretion; the sequence is MKVLWAALLIALLAGCQG. Tandem repeats lie at residues 82–103, 104–125, 126–147, 148–169, and 198–219. Residues 82 to 219 are 5 X 22 AA approximate tandem repeats; sequence ALMDETMKEL…RLDEVKEQVE (138 aa). A Methionine sulfoxide modification is found at Met145. Phosphoserine is present on Ser149. Positions 160–170 are LDL and other lipoprotein receptors binding; that stretch reads HLRKLRTVSYT. Heparin is bound by residues 164–167 and 193–200; these read LRTV and GERLRTRM. The segment at 230–281 is homooligomerization; it reads QQMRLQAEAFQARLKSWFEPLVEDMQRQWAGLVEKVQAAVGASAAPVPSDNH. The specificity for association with VLDL stretch occupies residues 242–254; it reads RLKSWFEPLVEDM.

This sequence belongs to the apolipoprotein A1/A4/E family. In terms of assembly, homotetramer. May interact with ABCA1; functionally associated with ABCA1 in the biogenesis of HDLs. May interact with APP/A4 amyloid-beta peptide; the interaction is extremely stable in vitro but its physiological significance is unclear. May interact with MAPT. May interact with MAP2. In the cerebrospinal fluid, interacts with secreted SORL1. Interacts with PMEL; this allows the loading of PMEL luminal fragment on ILVs to induce fibril nucleation. In terms of processing, APOE exists as multiple glycosylated and sialylated glycoforms within cells and in plasma. The extent of glycosylation and sialylation are tissue and context specific. Post-translationally, glycated in plasma VLDL. Phosphorylated by FAM20C in the extracellular medium.

It localises to the secreted. Its subcellular location is the extracellular space. The protein resides in the extracellular matrix. The protein localises to the extracellular vesicle. It is found in the endosome. It localises to the multivesicular body. Its function is as follows. APOE is an apolipoprotein, a protein associating with lipid particles, that mainly functions in lipoprotein-mediated lipid transport between organs via the plasma and interstitial fluids. APOE is a core component of plasma lipoproteins and is involved in their production, conversion and clearance. Apolipoproteins are amphipathic molecules that interact both with lipids of the lipoprotein particle core and the aqueous environment of the plasma. As such, APOE associates with chylomicrons, chylomicron remnants, very low density lipoproteins (VLDL) and intermediate density lipoproteins (IDL) but shows a preferential binding to high-density lipoproteins (HDL). It also binds a wide range of cellular receptors including the LDL receptor/LDLR, the LDL receptor-related proteins LRP1, LRP2 and LRP8 and the very low-density lipoprotein receptor/VLDLR that mediate the cellular uptake of the APOE-containing lipoprotein particles. Finally, APOE also has a heparin-binding activity and binds heparan-sulfate proteoglycans on the surface of cells, a property that supports the capture and the receptor-mediated uptake of APOE-containing lipoproteins by cells. A main function of APOE is to mediate lipoprotein clearance through the uptake of chylomicrons, VLDLs, and HDLs by hepatocytes. APOE is also involved in the biosynthesis by the liver of VLDLs as well as their uptake by peripheral tissues ensuring the delivery of triglycerides and energy storage in muscle, heart and adipose tissues. By participating in the lipoprotein-mediated distribution of lipids among tissues, APOE plays a critical role in plasma and tissues lipid homeostasis. APOE is also involved in two steps of reverse cholesterol transport, the HDLs-mediated transport of cholesterol from peripheral tissues to the liver, and thereby plays an important role in cholesterol homeostasis. First, it is functionally associated with ABCA1 in the biogenesis of HDLs in tissues. Second, it is enriched in circulating HDLs and mediates their uptake by hepatocytes. APOE also plays an important role in lipid transport in the central nervous system, regulating neuron survival and sprouting. The polypeptide is Apolipoprotein E (APOE) (Aotus nancymaae (Ma's night monkey)).